Consider the following 206-residue polypeptide: Holliday junction branch migration complex subunit RuvA (206 aa).

The interval 1–64 (MIGRLRGNLL…EDAQLLYGFN (64 aa)) is domain I. Residues 65-143 (TKKERALFRE…GWGAGDLFTP (79 aa)) are domain II. Residues 144 to 157 (ADTTSMDDASDLIS) are flexible linker. A domain III region spans residues 158 to 206 (SPQSAQDEAVSALISLGYKPVQASKMVSQVAKPDMTSESLIRESLKSMI).

The protein belongs to the RuvA family. As to quaternary structure, homotetramer. Forms an RuvA(8)-RuvB(12)-Holliday junction (HJ) complex. HJ DNA is sandwiched between 2 RuvA tetramers; dsDNA enters through RuvA and exits via RuvB. An RuvB hexamer assembles on each DNA strand where it exits the tetramer. Each RuvB hexamer is contacted by two RuvA subunits (via domain III) on 2 adjacent RuvB subunits; this complex drives branch migration. In the full resolvosome a probable DNA-RuvA(4)-RuvB(12)-RuvC(2) complex forms which resolves the HJ.

The protein localises to the cytoplasm. The RuvA-RuvB-RuvC complex processes Holliday junction (HJ) DNA during genetic recombination and DNA repair, while the RuvA-RuvB complex plays an important role in the rescue of blocked DNA replication forks via replication fork reversal (RFR). RuvA specifically binds to HJ cruciform DNA, conferring on it an open structure. The RuvB hexamer acts as an ATP-dependent pump, pulling dsDNA into and through the RuvAB complex. HJ branch migration allows RuvC to scan DNA until it finds its consensus sequence, where it cleaves and resolves the cruciform DNA. The polypeptide is Holliday junction branch migration complex subunit RuvA (Aliivibrio salmonicida (strain LFI1238) (Vibrio salmonicida (strain LFI1238))).